Reading from the N-terminus, the 54-residue chain is Conotoxin Cal6.17 (54 aa).

The signal sequence occupies residues 1–19 (MSGTGVLLLTLLLLVTMAT). Cystine bridges form between C24/C39, C32/C49, and C38/C53.

Expressed by the venom duct.

It is found in the secreted. Probable neurotoxin. In Californiconus californicus (California cone), this protein is Conotoxin Cal6.17.